A 539-amino-acid polypeptide reads, in one-letter code: Oviduct-specific glycoprotein (539 aa).

Positions M1–A21 are cleaved as a signal peptide. The GH18 domain occupies H22–D385. An intrachain disulfide couples C26 to C51. Residues P71–L72, G98–N101, Y142, L211–D214, and W355 contribute to the chitin site. N402 carries N-linked (GlcNAc...) asparagine glycosylation. Disordered stretches follow at residues T433–T480 and Q503–L539. Residues A440 to P457 are compositionally biased toward low complexity.

The protein belongs to the glycosyl hydrolase 18 family. In terms of tissue distribution, oviduct.

It is found in the cytoplasmic vesicle. It localises to the secretory vesicle. Binds to oocyte zona pellucida in vivo. May play a role in the fertilization process and/or early embryonic development. In Ovis aries (Sheep), this protein is Oviduct-specific glycoprotein (OVGP1).